The following is a 759-amino-acid chain: Catalase-peroxidase (759 aa).

The disordered stretch occupies residues Met-1–Asn-24. The segment at residues Trp-96 to Tyr-242 is a cross-link (tryptophyl-tyrosyl-methioninium (Trp-Tyr) (with M-268)). Catalysis depends on His-97, which acts as the Proton acceptor. A cross-link (tryptophyl-tyrosyl-methioninium (Tyr-Met) (with W-96)) is located at residues Tyr-242–Met-268. A heme b-binding site is contributed by His-283.

This sequence belongs to the peroxidase family. Peroxidase/catalase subfamily. In terms of assembly, homodimer or homotetramer. The cofactor is heme b. Post-translationally, formation of the three residue Trp-Tyr-Met cross-link is important for the catalase, but not the peroxidase activity of the enzyme.

It localises to the cytoplasm. It catalyses the reaction H2O2 + AH2 = A + 2 H2O. The enzyme catalyses 2 H2O2 = O2 + 2 H2O. Its function is as follows. Bifunctional enzyme with both catalase and broad-spectrum peroxidase activity. This Aspergillus fumigatus (strain CBS 144.89 / FGSC A1163 / CEA10) (Neosartorya fumigata) protein is Catalase-peroxidase.